Here is a 175-residue protein sequence, read N- to C-terminus: Endoribonuclease YbeY (175 aa).

Zn(2+)-binding residues include histidine 121, histidine 125, and histidine 131. The tract at residues proline 154–proline 175 is disordered. Residues proline 159–proline 175 show a composition bias toward polar residues.

It belongs to the endoribonuclease YbeY family. Zn(2+) serves as cofactor.

The protein localises to the cytoplasm. In terms of biological role, single strand-specific metallo-endoribonuclease involved in late-stage 70S ribosome quality control and in maturation of the 3' terminus of the 16S rRNA. The polypeptide is Endoribonuclease YbeY (Alcanivorax borkumensis (strain ATCC 700651 / DSM 11573 / NCIMB 13689 / SK2)).